Reading from the N-terminus, the 850-residue chain is MKLVIFDGNSILYRAFFALPELTTSNNIPTNAIYGFVNVILKYLEQEKPDYVAVAFDKRGREARKSEYEEYKANRKPMPDNLQVQIPYVREILYAFNIPIIEFEGYEADDVIGSLVNQFKNTGLDIVIITGDRDTLQLLDKNVVVKIVSTKFDKTVEDLYTVENVKEKYGVWANQVPDYKALVGDQSDNIPGVKGIGEKSAQKLLEEYSSLEEIYQNLDKIKSSIREKLEAGKDMAFLSKRLATIVCDLPLNVKLEDLRTKEWNKERLYEILVQLEFKSIIKRLGLSEVVQFEFVQQRTDIPDVEQKELESISQIRSKEIPLMFVQGEKCFYLYDQESNTVFITSNKLLIEEILKSDTVKIMYDLKNIFHQLNLEDTNNIKNCEDVMIASYVLDSTRSSYELETLFVSYLNTDIEAVKKDKKIVSVVLLKRLWDELLRLIDLNSCQFLYENIERPLIPVLYEMEKTGFKVDRDALIQYTKEIENKILKLETQIYQIAGEWFNINSPKQLSYILFEKLKLPVIKKTKTGYSTDAEVLEELFDKHEIVPLILDYRMYTKILTTYCQGLLQAINPSSGRVHTTFIQTGTATGRLASSDPNLQNIPVKYDEGKLIRKVFVPEGGHVLIDADYSQIELRILAHISEDERLISAFKNNVDIHSQTAAEVFGVDIADVTPEMRSQAKAVNFGIVYGISDYGLARDIKISRKEAAEFINKYFERYPKVKEYLDNTVKFARDNGFVLTLFNRKRYIKDIKSTNRNLRGYAERIAMNSPIQGSAADIMKLAMIKVYQKLKENNLKSKIILQVHDELLIEAPYEEKDIVKEIVKREMENAVALKVPLVVEVKEGLNWYETK.

The region spanning 1–288 (MKLVIFDGNS…SIIKRLGLSE (288 aa)) is the 5'-3' exonuclease domain. Residues 470-850 (VDRDALIQYT…KEGLNWYETK (381 aa)) form a polymerase region.

Belongs to the DNA polymerase type-A family.

The catalysed reaction is DNA(n) + a 2'-deoxyribonucleoside 5'-triphosphate = DNA(n+1) + diphosphate. In addition to polymerase activity, this DNA polymerase exhibits 3'-5' and 5'-3' exonuclease activity. The protein is DNA polymerase I (polA) of Caldicellulosiruptor bescii (strain ATCC BAA-1888 / DSM 6725 / KCTC 15123 / Z-1320) (Anaerocellum thermophilum).